A 20-amino-acid polypeptide reads, in one-letter code: uncharacterized protein (20 aa).

This is an uncharacterized protein from Serratia marcescens.